The following is a 289-amino-acid chain: Serine/threonine-protein phosphatase Pgam5, mitochondrial (289 aa).

The chain crosses the membrane as a helical span at residues 7–23; sequence FVCGTGAGLAAYYLQRL.

The protein belongs to the phosphoglycerate mutase family. BPG-dependent PGAM subfamily. Interacts with Pk92B/ASK1.

It localises to the mitochondrion outer membrane. It catalyses the reaction O-phospho-L-seryl-[protein] + H2O = L-seryl-[protein] + phosphate. The enzyme catalyses O-phospho-L-threonyl-[protein] + H2O = L-threonyl-[protein] + phosphate. Displays phosphatase activity for serine/threonine residues, and dephosphorylates and activates Pk92B kinase. Has apparently no phosphoglycerate mutase activity. This is Serine/threonine-protein phosphatase Pgam5, mitochondrial (Pgam5) from Drosophila melanogaster (Fruit fly).